A 364-amino-acid polypeptide reads, in one-letter code: N-acetyl-gamma-glutamyl-phosphate reductase (364 aa).

Cys-157 is an active-site residue.

Belongs to the NAGSA dehydrogenase family. Type 1 subfamily.

It localises to the cytoplasm. It carries out the reaction N-acetyl-L-glutamate 5-semialdehyde + phosphate + NADP(+) = N-acetyl-L-glutamyl 5-phosphate + NADPH + H(+). The protein operates within amino-acid biosynthesis; L-arginine biosynthesis; N(2)-acetyl-L-ornithine from L-glutamate: step 3/4. Functionally, catalyzes the NADPH-dependent reduction of N-acetyl-5-glutamyl phosphate to yield N-acetyl-L-glutamate 5-semialdehyde. This chain is N-acetyl-gamma-glutamyl-phosphate reductase, found in Bifidobacterium longum (strain NCC 2705).